The chain runs to 240 residues: Carboxy-S-adenosyl-L-methionine synthase (240 aa).

S-adenosyl-L-methionine is bound by residues tyrosine 35, 61 to 63 (GCS), 86 to 87 (DN), 112 to 113 (DI), and arginine 194.

This sequence belongs to the class I-like SAM-binding methyltransferase superfamily. Cx-SAM synthase family. Homodimer.

The enzyme catalyses prephenate + S-adenosyl-L-methionine = carboxy-S-adenosyl-L-methionine + 3-phenylpyruvate + H2O. Its function is as follows. Catalyzes the conversion of S-adenosyl-L-methionine (SAM) to carboxy-S-adenosyl-L-methionine (Cx-SAM). In Wolinella succinogenes (strain ATCC 29543 / DSM 1740 / CCUG 13145 / JCM 31913 / LMG 7466 / NCTC 11488 / FDC 602W) (Vibrio succinogenes), this protein is Carboxy-S-adenosyl-L-methionine synthase.